Consider the following 379-residue polypeptide: Cystathionine gamma-lyase (379 aa).

An N6-(pyridoxal phosphate)lysine modification is found at Lys-195.

It belongs to the trans-sulfuration enzymes family. Requires pyridoxal 5'-phosphate as cofactor.

The catalysed reaction is L,L-cystathionine + H2O = 2-oxobutanoate + L-cysteine + NH4(+). It catalyses the reaction L-homocysteine + H2O = 2-oxobutanoate + hydrogen sulfide + NH4(+) + H(+). Its function is as follows. Catalyzes the conversion of cystathionine to cysteine, and homocysteine to sulfide. The sequence is that of Cystathionine gamma-lyase (mccB) from Bacillus subtilis (strain 168).